Reading from the N-terminus, the 632-residue chain is U-box domain-containing protein 14 (632 aa).

Positions Val247–Glu321 constitute a U-box domain. ARM repeat units lie at residues Val377–Ile416, Glu418–Val457, Asp459–Ile498, Gln500–Thr539, and Gln541–Ile580.

In terms of assembly, homodimer. Interacts with SNL1. Binds to SD11, SD16, SD17, SD18, SD113, SD129 and SD25. As to expression, expressed in flowers, green siliques, seeds and rosette leaves.

It catalyses the reaction S-ubiquitinyl-[E2 ubiquitin-conjugating enzyme]-L-cysteine + [acceptor protein]-L-lysine = [E2 ubiquitin-conjugating enzyme]-L-cysteine + N(6)-ubiquitinyl-[acceptor protein]-L-lysine.. The protein operates within protein modification; protein ubiquitination. Functionally, functions as an E3 ubiquitin ligase with specific E2 ubiquitin-conjugating enzymes. Undergoes auto-ubiquitination. This is U-box domain-containing protein 14 (PUB14) from Arabidopsis thaliana (Mouse-ear cress).